Consider the following 317-residue polypeptide: Putative methyltransferase YMR310C (317 aa).

Serine 190 carries the phosphoserine modification.

This sequence belongs to the class IV-like SAM-binding methyltransferase superfamily.

The protein resides in the nucleus. The polypeptide is Putative methyltransferase YMR310C (Saccharomyces cerevisiae (strain ATCC 204508 / S288c) (Baker's yeast)).